Consider the following 729-residue polypeptide: Fatty acid oxidation complex subunit alpha (729 aa).

The tract at residues 1-189 is enoyl-CoA hydratase/isomerase; it reads MLYKGDTLYL…KIGLVDGVVK (189 aa). Residue Asp296 coordinates substrate. Residues 311–729 are 3-hydroxyacyl-CoA dehydrogenase; that stretch reads ETPKQAAVLG…ARLVGDLKTA (419 aa). Residues Met324, Asp343, 400-402, Lys407, and Ser429 contribute to the NAD(+) site; that span reads VVE. The active-site For 3-hydroxyacyl-CoA dehydrogenase activity is His450. Asn453 is a binding site for NAD(+). Residues Asn500 and Tyr660 each coordinate substrate.

It in the N-terminal section; belongs to the enoyl-CoA hydratase/isomerase family. In the C-terminal section; belongs to the 3-hydroxyacyl-CoA dehydrogenase family. In terms of assembly, heterotetramer of two alpha chains (FadB) and two beta chains (FadA).

It catalyses the reaction a (3S)-3-hydroxyacyl-CoA + NAD(+) = a 3-oxoacyl-CoA + NADH + H(+). The catalysed reaction is a (3S)-3-hydroxyacyl-CoA = a (2E)-enoyl-CoA + H2O. It carries out the reaction a 4-saturated-(3S)-3-hydroxyacyl-CoA = a (3E)-enoyl-CoA + H2O. The enzyme catalyses (3S)-3-hydroxybutanoyl-CoA = (3R)-3-hydroxybutanoyl-CoA. It catalyses the reaction a (3Z)-enoyl-CoA = a 4-saturated (2E)-enoyl-CoA. The catalysed reaction is a (3E)-enoyl-CoA = a 4-saturated (2E)-enoyl-CoA. Its pathway is lipid metabolism; fatty acid beta-oxidation. Its function is as follows. Involved in the aerobic and anaerobic degradation of long-chain fatty acids via beta-oxidation cycle. Catalyzes the formation of 3-oxoacyl-CoA from enoyl-CoA via L-3-hydroxyacyl-CoA. It can also use D-3-hydroxyacyl-CoA and cis-3-enoyl-CoA as substrate. The chain is Fatty acid oxidation complex subunit alpha from Escherichia coli (strain SE11).